Here is a 359-residue protein sequence, read N- to C-terminus: tRNA pseudouridine synthase B (359 aa).

Asp-63 (nucleophile) is an active-site residue.

Belongs to the pseudouridine synthase TruB family. Type 1 subfamily.

It catalyses the reaction uridine(55) in tRNA = pseudouridine(55) in tRNA. Responsible for synthesis of pseudouridine from uracil-55 in the psi GC loop of transfer RNAs. The chain is tRNA pseudouridine synthase B from Psychrobacter cryohalolentis (strain ATCC BAA-1226 / DSM 17306 / VKM B-2378 / K5).